Consider the following 463-residue polypeptide: 23S rRNA (uracil(1939)-C(5))-methyltransferase RlmD (463 aa).

Residues K6–A76 form the TRAM domain. [4Fe-4S] cluster-binding residues include C90, C96, C99, and C178. S-adenosyl-L-methionine is bound by residues Q288, F317, N322, E341, D368, and D389. C415 (nucleophile) is an active-site residue.

The protein belongs to the class I-like SAM-binding methyltransferase superfamily. RNA M5U methyltransferase family. RlmD subfamily.

The enzyme catalyses uridine(1939) in 23S rRNA + S-adenosyl-L-methionine = 5-methyluridine(1939) in 23S rRNA + S-adenosyl-L-homocysteine + H(+). Its function is as follows. Catalyzes the formation of 5-methyl-uridine at position 1939 (m5U1939) in 23S rRNA. The sequence is that of 23S rRNA (uracil(1939)-C(5))-methyltransferase RlmD from Acinetobacter baumannii (strain SDF).